Reading from the N-terminus, the 78-residue chain is UPF0291 protein LBUL_1264 (78 aa).

It belongs to the UPF0291 family.

Its subcellular location is the cytoplasm. This Lactobacillus delbrueckii subsp. bulgaricus (strain ATCC BAA-365 / Lb-18) protein is UPF0291 protein LBUL_1264.